The primary structure comprises 233 residues: Large ribosomal subunit protein uL1 (233 aa).

The protein belongs to the universal ribosomal protein uL1 family. As to quaternary structure, part of the 50S ribosomal subunit.

Functionally, binds directly to 23S rRNA. The L1 stalk is quite mobile in the ribosome, and is involved in E site tRNA release. In terms of biological role, protein L1 is also a translational repressor protein, it controls the translation of the L11 operon by binding to its mRNA. In Hamiltonella defensa subsp. Acyrthosiphon pisum (strain 5AT), this protein is Large ribosomal subunit protein uL1.